Consider the following 168-residue polypeptide: MVEKKPNLTLEFHDYLALKKVLFDWADSYDAKDWDRLRSIIAPTLTVDYRQIGLRKWDDMPAEDYMAMISDMDFLGDPTVKTQHLLGESWWEKISDTEVIGHHQLRAAHQVYTDSTLQTVKLKGHGHATNEHYYRKVDGVWKFAGLKPTVRWNEYQFEDVFRAAKPSV.

Substrate-binding residues include Tyr29 and Tyr49. Active-site residues include His84 and His109. Residue Asn130 coordinates substrate.

It belongs to the scytalone dehydratase family. Homotrimer. Each subunit contains an active site, located in the central part of the hydrophobic core of the monomer, which functions independently.

The protein localises to the endosome. It carries out the reaction scytalone = 1,3,8-trihydroxynaphthalene + H2O. It functions in the pathway pigment biosynthesis; melanin biosynthesis. With respect to regulation, fenoxanil inhibits arp1 scytalone dehydratase activity. In terms of biological role, scytalone dehydratase; part of the gene cluster that mediates the biosynthesis of dihydroxynaphthalene (DHN)-melanin, a bluish-green pigment and a structural component of the conidial wall. The first step of the pathway is the production of the heptaketide naphtopyrone YWA1 by the polyketide synthase alb1 though condensation of acetyl-CoA with malonyl-CoA. The naphtopyrone YWA1 is then converted to the pentaketide 1,3,6,8-tetrahydroxynaphthalene (1,3,6,8-THN) by the heptaketide hydrolyase ayg1 though chain-length shortening. 1,3,6,8-THN is substrate of the hydroxynaphthalene reductase arp2 to yield scytalone. The scytalone dehydratase arp1 then reduces scytalone to 1,3,8-THN. 1,3,8-THN is also substrate of the hydroxynaphthalene reductase arp2 to yield vermelone. Vermelone is further converted by the multicopper oxidase abr1 to 1,8-DHN. Finally the laccase abr2 transforms 1,8-DHN to DHN-melanin. DHN-melanin biosynthesis appears to be initiated in endosomes where early enzymes (abl1, ayg1, arp1 and arp2) localize, with exocytosis leading to melanin deposition on the cell surface where late enzymes (abr1 and abr2) localize. DHN-melanin is an important structural component of the outer cell wall and is required for the presence of conidial surface hydrophobins. DHN-melanin also plays a crucial role in fungal virulence, including a protective role against the host's immune defenses. DHN-melanin also protects conidia against amoeba predation. The protein is Scytalone dehydratase arp1 of Aspergillus fumigatus (strain ATCC MYA-4609 / CBS 101355 / FGSC A1100 / Af293) (Neosartorya fumigata).